Reading from the N-terminus, the 365-residue chain is Serpentine receptor class epsilon-21 (365 aa).

7 helical membrane-spanning segments follow: residues 49–69 (ILIN…VFCI), 82–102 (IIIS…FVFI), 116–136 (LLFW…HTLL), 158–178 (VWIA…YAFL), 189–209 (IFIV…IIYF), 250–270 (VVVV…PIIL), and 292–314 (PLVV…LSYY).

It belongs to the nematode receptor-like protein sre family.

The protein localises to the membrane. This chain is Serpentine receptor class epsilon-21 (sre-21), found in Caenorhabditis elegans.